A 307-amino-acid chain; its full sequence is Ribosomal RNA small subunit methyltransferase H (307 aa).

Residues 33 to 35 (GGY), D51, F82, D96, and Q103 contribute to the S-adenosyl-L-methionine site.

It belongs to the methyltransferase superfamily. RsmH family.

The protein resides in the cytoplasm. The catalysed reaction is cytidine(1402) in 16S rRNA + S-adenosyl-L-methionine = N(4)-methylcytidine(1402) in 16S rRNA + S-adenosyl-L-homocysteine + H(+). Specifically methylates the N4 position of cytidine in position 1402 (C1402) of 16S rRNA. This chain is Ribosomal RNA small subunit methyltransferase H, found in Rickettsia massiliae (strain Mtu5).